An 84-amino-acid chain; its full sequence is Small ribosomal subunit protein bS16 (84 aa).

It belongs to the bacterial ribosomal protein bS16 family.

This Dichelobacter nodosus (strain VCS1703A) protein is Small ribosomal subunit protein bS16.